The chain runs to 154 residues: Proteinase inhibitor type-2 P303.51 (154 aa).

The signal sequence occupies residues Met1–Ala25. 2 repeat units span residues Ala31 to Lys87 and Pro88 to Lys147. Intrachain disulfides connect Cys34/Cys122, Cys38/Cys118, Cys46/Cys128, Cys58/Cys95, Cys61/Cys79, Cys62/Cys91, Cys68/Cys104, and Cys121/Cys139.

Belongs to the protease inhibitor I20 (potato type II proteinase inhibitor) family.

This chain is Proteinase inhibitor type-2 P303.51, found in Solanum tuberosum (Potato).